The sequence spans 308 residues: MPERTMVRVDEKQLPRWTRWLDLGDRLLAVLLLAPAAILLSLIIVYPVARLVYTSFFSLSLTSGLPAEFIGFENYTAMFDDPIFWETTWNTVLITLITVPGALFMGLGLALLANLPFSMQWPMRLSLLIPWALPLSFAGLIFAWFFHYEYGVVNDVLNRLGFEGIIWFNSPNWAFAAICLTIIWKTSSFMALMILAGLQTIPRSLYEAADVDGAGKIRRFFEITLPLLKPSIVVALIFRTITALQTFDIPYMMTGGGPGTSTTTLAMYIHQNTVSFLDLGYGSALAVVMFALSMCVTAVYLRIIRTKD.

A run of 6 helical transmembrane segments spans residues 28–48 (LAVLLLAPAAILLSLIIVYPV), 92–112 (VLITLITVPGALFMGLGLALL), 126–146 (SLLIPWALPLSFAGLIFAWFF), 164–184 (GIIWFNSPNWAFAAICLTIIW), 223–243 (ITLPLLKPSIVVALIFRTITA), and 279–299 (LGYGSALAVVMFALSMCVTAV). In terms of domain architecture, ABC transmembrane type-1 spans 88-300 (TWNTVLITLI…ALSMCVTAVY (213 aa)).

Belongs to the binding-protein-dependent transport system permease family. The complex is probably composed of two ATP-binding proteins (SmoE), two transmembrane proteins (SmoG and SmoH) and a solute-binding protein (SmoF).

It is found in the cell inner membrane. Its function is as follows. Part of the ABC transporter complex SmoEFGH involved in sulfoquinovosyl glycerol (SQGro) uptake. Responsible for the translocation of the substrate across the membrane. The polypeptide is Sulfoquinovosyl glycerol transport system permease protein SmoG (Agrobacterium fabrum (strain C58 / ATCC 33970) (Agrobacterium tumefaciens (strain C58))).